Consider the following 986-residue polypeptide: Mediator of RNA polymerase II transcription subunit 24 (986 aa).

Short sequence motifs (LXXLL motif) lie at residues 128-132, 341-345, 445-449, 554-558, 785-789, and 855-859; these read LNWLL, LTPLL, LDLLL, LVALL, LPNLL, and LMRLL.

This sequence belongs to the Mediator complex subunit 24 family. In terms of assembly, component of the Mediator complex.

It localises to the nucleus. Functionally, component of the Mediator complex, a coactivator involved in the regulated transcription of nearly all RNA polymerase II-dependent genes. Mediator functions as a bridge to convey information from gene-specific regulatory proteins to the basal RNA polymerase II transcription machinery. Mediator is recruited to promoters by direct interactions with regulatory proteins and serves as a scaffold for the assembly of a functional preinitiation complex with RNA polymerase II and the general transcription factors. This Gallus gallus (Chicken) protein is Mediator of RNA polymerase II transcription subunit 24 (MED24).